A 174-amino-acid chain; its full sequence is Ferredoxin-thioredoxin reductase, variable chain, chloroplastic (174 aa).

A chloroplast-targeting transit peptide spans 1-62 (MTTGVAVMSS…RTRARLAICC (62 aa)). Residues 69–81 (DSSTGFDSSSSSP) are compositionally biased toward low complexity. Residues 69 to 89 (DSSTGFDSSSSSPPEEDEELK) are disordered. Serine 70 and serine 71 each carry phosphoserine.

It belongs to the ferredoxin thioredoxin reductase alpha subunit family. In terms of assembly, heterodimer of subunit A (variable subunit) and subunit B (catalytic subunit). Heterodimeric FTR forms a complex with ferredoxin and thioredoxin.

Its subcellular location is the plastid. It localises to the chloroplast. Variable subunit of the ferredoxin-thioredoxin reductase (FTR), which catalyzes the two-electron reduction of thioredoxins by the electrons provided by reduced ferredoxin. The chain is Ferredoxin-thioredoxin reductase, variable chain, chloroplastic (FTRV) from Spinacia oleracea (Spinach).